The chain runs to 62 residues: Translational regulator CsrA (62 aa).

It belongs to the CsrA/RsmA family. Homodimer; the beta-strands of each monomer intercalate to form a hydrophobic core, while the alpha-helices form wings that extend away from the core.

The protein localises to the cytoplasm. Functionally, a key translational regulator that binds mRNA to regulate translation initiation and/or mRNA stability. Mediates global changes in gene expression, shifting from rapid growth to stress survival by linking envelope stress, the stringent response and the catabolite repression systems. Usually binds in the 5'-UTR; binding at or near the Shine-Dalgarno sequence prevents ribosome-binding, repressing translation, binding elsewhere in the 5'-UTR can activate translation and/or stabilize the mRNA. Its function is antagonized by small RNA(s). In Haemophilus ducreyi (strain 35000HP / ATCC 700724), this protein is Translational regulator CsrA.